A 581-amino-acid chain; its full sequence is Transcription activator GAGA (581 aa).

The 66-residue stretch at 34-99 folds into the BTB domain; it reads VDCTLAAGGR…VYRGEVSVDH (66 aa). Positions 201-397 are interaction with E(bx); the sequence is VIQAFLPARK…SSGSGSGALS (197 aa). At threonine 237 the chain carries Phosphothreonine. 2 disordered regions span residues 298–343 and 364–404; these read ITPA…EQPA and LRHF…SVPQ. The C2H2-type; degenerate zinc finger occupies 343–366; it reads ATCPICYAVIRQSRNLRRHLELRH. Residues 381–401 are compositionally biased toward low complexity; that stretch reads GKKSSSGSSGSGSGALSSSGS.

As to quaternary structure, interacts with Bin1, lolal, corto, ttk and ph-p. Interacts with FACT subunits Ssrp and dre4/SPT16. Interacts with E(bx). Upon ecdysone stimulation, interacts with Nup98. Post-translationally, the N-terminus is blocked. As to expression, expressed in the central nervous system throughout development.

The protein resides in the nucleus. The protein localises to the chromosome. In terms of biological role, transcriptional activator that functions by regulating chromatin structure. Overcomes the repressive effects of chromatin by promoting the open chromatin conformation in promoter gene regions, thereby allowing access to other transcription factors. Binds to DNA Polycomb response elements (PREs) at the bithorax complex and to the proximal region of the engrailed promoter, and positively regulates transcription of many genes including homeotic ones. Involved in zygotic genome activation (ZGA), a critical event in early embryonic development during which the developmental control passes from maternally provided mRNAs to the expression of the zygotic genome after fertilization. Binds to the DNA sequence (GA)n, with optimal binding to the pentamer 5'-GAGAG-3'. Binds DNA as an oligomer. May also act as a transcriptional repressor, maintaining the repressed state of genes including lolal, and down-regulating its own transcription. Required for dosage compensation in males and may be involved in oogenesis. Also has a role in nuclear division. In Drosophila melanogaster (Fruit fly), this protein is Transcription activator GAGA (Trl).